We begin with the raw amino-acid sequence, 704 residues long: Elongation factor G (704 aa).

A tr-type G domain is found at 10–286; the sequence is KKVRNIGIMA…AVIDFLPNPM (277 aa). GTP-binding positions include 19–26, 83–87, and 137–140; these read AHIDAGKT, DTPGH, and NKMD.

It belongs to the TRAFAC class translation factor GTPase superfamily. Classic translation factor GTPase family. EF-G/EF-2 subfamily.

The protein resides in the cytoplasm. Catalyzes the GTP-dependent ribosomal translocation step during translation elongation. During this step, the ribosome changes from the pre-translocational (PRE) to the post-translocational (POST) state as the newly formed A-site-bound peptidyl-tRNA and P-site-bound deacylated tRNA move to the P and E sites, respectively. Catalyzes the coordinated movement of the two tRNA molecules, the mRNA and conformational changes in the ribosome. In Corynebacterium jeikeium (strain K411), this protein is Elongation factor G.